The sequence spans 691 residues: Histone-lysine N-methyltransferase Set8 (691 aa).

The interval 1-29 (MIMVRRRQRPAKEAASSSSGGASSGSGIP) is disordered. Over residues 14–27 (AASSSSGGASSGSG) the composition is skewed to low complexity. 2 positions are modified to phosphoserine: Ser-195 and Ser-250. At Thr-252 the chain carries Phosphothreonine. At Ser-281 the chain carries Phosphoserine. 4 disordered regions span residues 341–363 (TANTESPAGQPRRRKPATPHRIL), 382–401 (GSADPLSPRKSPRKLPTTTA), 407–437 (KSRRRLNQPKPQAPYQPQLQKPPSQQQQQQQ), and 464–516 (AEER…ATNG). Position 344 is a phosphothreonine (Thr-344). Residues Ser-346, Ser-383, Ser-388, and Ser-392 each carry the phosphoserine modification. Composition is skewed to polar residues over residues 421-430 (YQPQLQKPPS) and 471-481 (NKAPATANSNK). The 122-residue stretch at 555–676 (DGLQVRHFMG…PGEELTYDYG (122 aa)) folds into the SET domain. Residues 565-567 (KGR), Tyr-610, and 637-638 (NH) contribute to the S-adenosyl-L-methionine site.

Belongs to the class V-like SAM-binding methyltransferase superfamily. Histone-lysine methyltransferase family. PR/SET subfamily.

The protein resides in the nucleus. It is found in the chromosome. The enzyme catalyses L-lysyl(20)-[histone H4] + S-adenosyl-L-methionine = N(6)-methyl-L-lysyl(20)-[histone H4] + S-adenosyl-L-homocysteine + H(+). Its function is as follows. Histone methyltransferase that specifically monomethylates 'Lys-20' of histone H4. H4 'Lys-20' monomethylation is enriched during mitosis and represents a specific tag for epigenetic transcriptional repression. Mainly functions in euchromatin regions, thereby playing a central role in the silencing of euchromatic genes. Required for cell proliferation, possibly by contributing to the maintenance of proper higher-order structure of DNA and chromosome condensation during mitosis. This chain is Histone-lysine N-methyltransferase Set8, found in Drosophila melanogaster (Fruit fly).